We begin with the raw amino-acid sequence, 364 residues long: tRNA 2-selenouridine synthase (364 aa).

Residues 14-137 (LIADTPIIDV…LRQTAIQATI (124 aa)) form the Rhodanese domain. Cys97 acts as the S-selanylcysteine intermediate in catalysis.

It belongs to the SelU family. As to quaternary structure, monomer.

The enzyme catalyses 5-methylaminomethyl-2-thiouridine(34) in tRNA + selenophosphate + (2E)-geranyl diphosphate + H2O + H(+) = 5-methylaminomethyl-2-selenouridine(34) in tRNA + (2E)-thiogeraniol + phosphate + diphosphate. The catalysed reaction is 5-methylaminomethyl-2-thiouridine(34) in tRNA + (2E)-geranyl diphosphate = 5-methylaminomethyl-S-(2E)-geranyl-thiouridine(34) in tRNA + diphosphate. It carries out the reaction 5-methylaminomethyl-S-(2E)-geranyl-thiouridine(34) in tRNA + selenophosphate + H(+) = 5-methylaminomethyl-2-(Se-phospho)selenouridine(34) in tRNA + (2E)-thiogeraniol. It catalyses the reaction 5-methylaminomethyl-2-(Se-phospho)selenouridine(34) in tRNA + H2O = 5-methylaminomethyl-2-selenouridine(34) in tRNA + phosphate. Involved in the post-transcriptional modification of the uridine at the wobble position (U34) of tRNA(Lys), tRNA(Glu) and tRNA(Gln). Catalyzes the conversion of 2-thiouridine (S2U-RNA) to 2-selenouridine (Se2U-RNA). Acts in a two-step process involving geranylation of 2-thiouridine (S2U) to S-geranyl-2-thiouridine (geS2U) and subsequent selenation of the latter derivative to 2-selenouridine (Se2U) in the tRNA chain. This chain is tRNA 2-selenouridine synthase, found in Escherichia coli (strain SMS-3-5 / SECEC).